A 365-amino-acid chain; its full sequence is S-adenosylmethionine:tRNA ribosyltransferase-isomerase (365 aa).

The protein belongs to the QueA family. Monomer.

It is found in the cytoplasm. The enzyme catalyses 7-aminomethyl-7-carbaguanosine(34) in tRNA + S-adenosyl-L-methionine = epoxyqueuosine(34) in tRNA + adenine + L-methionine + 2 H(+). It participates in tRNA modification; tRNA-queuosine biosynthesis. Its function is as follows. Transfers and isomerizes the ribose moiety from AdoMet to the 7-aminomethyl group of 7-deazaguanine (preQ1-tRNA) to give epoxyqueuosine (oQ-tRNA). The chain is S-adenosylmethionine:tRNA ribosyltransferase-isomerase from Rickettsia africae (strain ESF-5).